The primary structure comprises 77 residues: Secapin (77 aa).

The first 32 residues, 1 to 32 (MKNYSKNATYLITVLLFSFVAMLLIIPSKCEA), serve as a signal peptide directing secretion. A propeptide spanning residues 33–52 (VSNDMQPLEARSADLVPEPR) is cleaved from the precursor. Cysteines 61 and 72 form a disulfide.

The protein belongs to the secapin family. Expressed by the venom gland.

It localises to the secreted. In terms of biological role, nontoxic peptide. The protein is Secapin of Vespa magnifica (Hornet).